An 816-amino-acid chain; its full sequence is uncharacterized protein (816 aa).

4 disordered regions span residues 1-34, 65-101, 154-406, and 770-816; these read MLFN…QQES, RQNN…GYKN, DEKD…ENPE, and RQHK…VMYA. Positions 18–32 are enriched in low complexity; sequence NQSSANTQNQQAHQQ. The span at 83-92 shows a compositional bias: polar residues; that stretch reads VSATSAYSKQ. Residues 161–223 show a composition bias toward low complexity; it reads TTTSSSTSTS…STSTTSTSTT (63 aa). The segment covering 246–260 has biased composition (polar residues); it reads ESTSIGKGTADSAQI. Ser-286 is modified (phosphoserine). The segment covering 292 to 316 has biased composition (basic and acidic residues); it reads DEQKEEKSDVKKVNPPSGEEKKEVE. Acidic residues predominate over residues 317–326; sequence AEGDAEEETE. Positions 327-342 are enriched in low complexity; it reads QSSAEESAERTSTPET. Residues Ser-343 and Ser-347 each carry the phosphoserine modification. Acidic residues predominate over residues 343–353; it reads SEPESEEDESP. Low complexity predominate over residues 380–396; the sequence is KSPTSSSTQKSKTAAPS. Basic and acidic residues-rich tracts occupy residues 770-792 and 799-816; these read RQHK…DRSQ and PKDD…VMYA. Thr-809 bears the Phosphothreonine mark.

In terms of processing, pyrophosphorylated by 5-diphosphoinositol pentakisphosphate (5-IP7). Serine pyrophosphorylation is achieved by Mg(2+)-dependent, but enzyme independent transfer of a beta-phosphate from a inositol pyrophosphate to a pre-phosphorylated serine residue.

This is an uncharacterized protein from Saccharomyces cerevisiae (strain ATCC 204508 / S288c) (Baker's yeast).